The sequence spans 310 residues: Methionyl-tRNA formyltransferase (310 aa).

(6S)-5,6,7,8-tetrahydrofolate is bound at residue 109-112 (SLLP).

The protein belongs to the Fmt family.

The catalysed reaction is L-methionyl-tRNA(fMet) + (6R)-10-formyltetrahydrofolate = N-formyl-L-methionyl-tRNA(fMet) + (6S)-5,6,7,8-tetrahydrofolate + H(+). Its function is as follows. Attaches a formyl group to the free amino group of methionyl-tRNA(fMet). The formyl group appears to play a dual role in the initiator identity of N-formylmethionyl-tRNA by promoting its recognition by IF2 and preventing the misappropriation of this tRNA by the elongation apparatus. This Pseudomonas putida (strain W619) protein is Methionyl-tRNA formyltransferase.